The primary structure comprises 143 residues: Flagellar assembly factor FliW (143 aa).

It belongs to the FliW family. As to quaternary structure, interacts with translational regulator CsrA and flagellin(s).

The protein localises to the cytoplasm. Its function is as follows. Acts as an anti-CsrA protein, binds CsrA and prevents it from repressing translation of its target genes, one of which is flagellin. Binds to flagellin and participates in the assembly of the flagellum. This chain is Flagellar assembly factor FliW, found in Clostridium botulinum (strain Okra / Type B1).